The following is a 100-amino-acid chain: Sodium-influx-stimulating peptide (100 aa).

Residues 1–23 (MLSSVALRYLLVLSLAFLAVVTS) form the signal peptide.

Post-translationally, three disulfide bonds are present. As to expression, expressed by the yellow cells, peptidergic (neuroendocrine) neurons of the central nervous system.

In terms of biological role, stimulates integumental Na(+) uptake. Controls the activity of sodium pumps in the integument, pericardium, ureter and nephridial gland. The polypeptide is Sodium-influx-stimulating peptide (SIS) (Lymnaea stagnalis (Great pond snail)).